A 450-amino-acid chain; its full sequence is uncharacterized protein (450 aa).

The segment covering 141–151 (WLDKTDGEKNS) has biased composition (basic and acidic residues). Disordered stretches follow at residues 141 to 171 (WLDK…DSAG), 276 to 298 (LQDS…AVSQ), and 395 to 416 (DDED…LSRN). Residues 152–171 (EASSTDNSLENSTKGADSAG) show a composition bias toward polar residues. Residues 283-298 (QGDKGEKESKDDAVSQ) are compositionally biased toward basic and acidic residues. Residues 395–411 (DDEDEDNVDNSEGDEES) are compositionally biased toward acidic residues.

This is an uncharacterized protein from Saccharomyces cerevisiae (strain ATCC 204508 / S288c) (Baker's yeast).